Reading from the N-terminus, the 219-residue chain is Guanylate kinase (219 aa).

The Guanylate kinase-like domain maps to 15-194 (GLMFVLSSPS…AFAEVHSILK (180 aa)). 22–29 (SPSGAGKT) contributes to the ATP binding site.

It belongs to the guanylate kinase family.

It is found in the cytoplasm. It carries out the reaction GMP + ATP = GDP + ADP. Essential for recycling GMP and indirectly, cGMP. The chain is Guanylate kinase from Rhodopseudomonas palustris (strain BisB18).